Here is a 414-residue protein sequence, read N- to C-terminus: GPI mannosyltransferase 1 (414 aa).

A run of 10 helical transmembrane segments spans residues 6–26 (ISHI…FGLY), 87–107 (YIFM…LSGI), 119–139 (IIML…STRG), 149–171 (IMLS…WLGL), 183–203 (LPSI…VPIV), 213–233 (FLIT…SIYG), 282–302 (MEKF…PLLF), 316–336 (FAFV…FLIF), 356–376 (IVAL…AYQL), and 387–407 (GLLF…SVFI).

This sequence belongs to the PIGM family.

The protein resides in the endoplasmic reticulum membrane. It participates in glycolipid biosynthesis; glycosylphosphatidylinositol-anchor biosynthesis. In terms of biological role, mannosyltransferase involved in glycosylphosphatidylinositol-anchor biosynthesis. Transfers the first alpha-1,4-mannose to GlcN-acyl-PI during GPI precursor assembly. Required for cell wall integrity. The protein is GPI mannosyltransferase 1 (GPI14) of Debaryomyces hansenii (strain ATCC 36239 / CBS 767 / BCRC 21394 / JCM 1990 / NBRC 0083 / IGC 2968) (Yeast).